The following is a 179-amino-acid chain: Small ribosomal subunit protein uS7 (179 aa).

The protein belongs to the universal ribosomal protein uS7 family. In terms of assembly, part of the 30S ribosomal subunit. Contacts proteins S9 and S11. Cross-links to IF3 and the P and E site tRNAs.

Its function is as follows. One of the primary rRNA binding proteins, it binds directly to 16S rRNA where it nucleates assembly of the head domain of the 30S subunit. Is located at the subunit interface close to the decoding center, where it has been shown to contact mRNA. Has been shown to contact tRNA in both the P and E sites; it probably blocks exit of the E site tRNA. Protein S7 is also a translational repressor protein; it regulates the expression of the str operon members to different degrees by binding to its mRNA. The polypeptide is Small ribosomal subunit protein uS7 (rpsG) (Escherichia coli (strain K12)).